A 143-amino-acid polypeptide reads, in one-letter code: Pre-mRNA-splicing factor U5-Cwc21 (143 aa).

The 44-residue stretch at 27–70 (EHHRSLRAIKLKVLLYREEREAAGVPPDVISRECATLHGSLLRN) folds into the CWF21 domain.

The protein belongs to the CWC21 family. Associates with the NTC complex (or PRP19-associated complex). The NTC complex associates with the spliceosome after the release of the U1 and U4 snRNAs and forms the CWC spliceosome subcomplex reminiscent of a late-stage spliceosome. Associates specifically with U5-containing snRNPs.

The protein resides in the cytoplasm. Its subcellular location is the nucleus. Essential protein involved in pre-mRNA cis- and trans-splicing. May function at or prior to the first catalytic step of splicing at the catalytic center of the spliceosome. May do so by stabilizing the catalytic center or the position of the RNA substrate. This Trypanosoma brucei brucei (strain 927/4 GUTat10.1) protein is Pre-mRNA-splicing factor U5-Cwc21.